Here is a 112-residue protein sequence, read N- to C-terminus: Protein Churchill (112 aa).

Residues cysteine 2, cysteine 5, cysteine 30, cysteine 33, histidine 59, cysteine 61, cysteine 64, histidine 66, histidine 71, cysteine 88, and cysteine 91 each contribute to the Zn(2+) site.

This sequence belongs to the Churchill family.

Transcriptional activator that mediates FGF signaling during neural development. Plays a role in the regulation of cell movement. Does not bind DNA by itself. The protein is Protein Churchill (churc1) of Xenopus laevis (African clawed frog).